The primary structure comprises 347 residues: UDP-N-acetylenolpyruvoylglucosamine reductase (347 aa).

Positions 16-187 (AIEQCSHYLV…IAVGLKLPKT (172 aa)) constitute an FAD-binding PCMH-type domain. Arginine 163 is an active-site residue. Residue serine 233 is the Proton donor of the active site. Glutamate 328 is a catalytic residue.

It belongs to the MurB family. FAD serves as cofactor.

The protein resides in the cytoplasm. The enzyme catalyses UDP-N-acetyl-alpha-D-muramate + NADP(+) = UDP-N-acetyl-3-O-(1-carboxyvinyl)-alpha-D-glucosamine + NADPH + H(+). It functions in the pathway cell wall biogenesis; peptidoglycan biosynthesis. Cell wall formation. This chain is UDP-N-acetylenolpyruvoylglucosamine reductase, found in Vibrio vulnificus (strain CMCP6).